A 188-amino-acid chain; its full sequence is Multiple organellar RNA editing factor 7, mitochondrial (188 aa).

The N-terminal 20 residues, 1-20 (MARIIRRPLNLTAAVRFRLS), are a transit peptide targeting the mitochondrion. Residues 169–188 (DAKSGVVKKKHRRKRKKKLI) form a disordered region. The segment covering 174 to 188 (VVKKKHRRKRKKKLI) has biased composition (basic residues).

The protein belongs to the MORF family. Heterodimers with MORF8/RIP1, MORF5/RIP5 and MORF6/RIP6.

Its subcellular location is the mitochondrion. In terms of biological role, involved in organellar RNA editing. Required for the processing of few RNA editing sites in mitochondria. The polypeptide is Multiple organellar RNA editing factor 7, mitochondrial (Arabidopsis thaliana (Mouse-ear cress)).